Here is a 687-residue protein sequence, read N- to C-terminus: A-kinase anchor protein 8 (687 aa).

An interaction with MCM2 region spans residues 1–195; the sequence is MEQSYGGYGA…FLRGRGQGRF (195 aa). The interval 1-210 is interaction with DPY30; sequence MEQSYGGYGA…SSTFIRSDPF (210 aa). Position 72 is a phosphoserine (S72). Residues 104–124 form a disordered region; it reads SKEGGRGGISSGGEGMQDRDS. At R109 the chain carries Asymmetric dimethylarginine; alternate. Position 109 is an omega-N-methylarginine; alternate (R109). The segment covering 109–118 has biased composition (gly residues); the sequence is RGGISSGGEG. Residues 109–201 are interaction with DDX5; sequence RGGISSGGEG…QGRFQDRSNS (93 aa). Positions 127 to 152 are nuclear matrix targeting site; the sequence is RFQPYESYDSRPCMPEHTPYRPSYSY. The segment at 189–221 is disordered; it reads GRGQGRFQDRSNSSTFIRSDPFMPPSASSEPLS. Phosphoserine is present on S199. Omega-N-methylarginine is present on residues R233 and R277. The disordered stretch occupies residues 278 to 380; it reads SQTRIRDWPR…KQRRRDRMRD (103 aa). 2 stretches are compositionally biased toward basic and acidic residues: residues 281 to 295 and 312 to 321; these read RIRDWPRRRGFERFG and PDAKLARADS. The Bipartite nuclear localization signal motif lies at 287–304; the sequence is RRRGFERFGPDNMGRKRK. Residue K315 forms a Glycyl lysine isopeptide (Lys-Gly) (interchain with G-Cter in SUMO2) linkage. Phosphoserine is present on residues S321, S326, and S337. A compositionally biased stretch (acidic residues) spans 322 to 332; sequence EGDLSENDDGA. Residues 336-358 are compositionally biased toward basic and acidic residues; sequence RSGDEEFRGEDDLCDSRKQRGEK. An involved in chromatin-binding region spans residues 385-448; that stretch reads RIQFACSVCK…NKKIEKRRQE (64 aa). C2H2 AKAP95-type zinc fingers lie at residues 390–412 and 479–502; these read CSVCKFRSFEDEEIQKHLQSKFH and CLACDMLIPAQHQLLQRHLHSVDH. The interval 523–565 is involved in condensin complex recruitment; sequence SVLNNKHIVKMLEKYLKGEDPFVNETADLETEGDENLGEEKET. T553 bears the Phosphothreonine mark. Residue K563 forms a Glycyl lysine isopeptide (Lys-Gly) (interchain with G-Cter in SUMO2) linkage. The tract at residues 568-585 is RII-binding; sequence EVAAEVLAEVITAAVKAV. A required for interaction with MYCBP region spans residues 572 to 589; that stretch reads EVLAEVITAAVKAVEGDG. The segment at 606 to 687 is disordered; it reads VDTAEAGSDS…DAEAKDTPTE (82 aa). Over residues 633–648 the composition is skewed to basic and acidic residues; the sequence is RNMEDMARGEAAEARN. Positions 649 to 666 are enriched in low complexity; the sequence is EAAVPAAAAGSPVPVIAI. The residue at position 659 (S659) is a Phosphoserine.

Belongs to the AKAP95 family. As to quaternary structure, binds to dimeric RII-alpha regulatory subunit of PKA during mitosis. Interacts (via C-terminus) with FIGN. Interacts with NCAPD2, CCND1, CCND3, MCM2, RPS6KA1, PDE4A, CASP3. Interacts with DDX5, CCNE1. Interacts with NFKB1; detetcted in the cytoplasm. Interacts with MYCBP; MYCBP is translocated to the nucleus and the interaction prevents the association of the PKA catalytic subunit leading to suppression of PKA activity. Interacts with DPY30; mediating AKAP8 association with at least the MLL4/WBP7 HMT complex. Interacts with HDAC3; increased during mitosis. Interacts with GJA1; in the nucleus and in the nuclear membrane; the nuclear association increases with progress of cell cycle G1, S and G2 phase and decreases in M phase. Post-translationally, phosphorylated on tyrosine residues probably by SRC subfamily protein kinases; multiple phosphorylation is leading to dissociation from nuclear structures implicated in chromatin structural changes. Widely expressed. The protein has been detected in liver, fibroblasts, granulosa, myoblast, lymphoma and Sertoli cells.

It is found in the nucleus matrix. Its subcellular location is the nucleus. The protein localises to the nucleolus. The protein resides in the cytoplasm. Anchoring protein that mediates the subcellular compartmentation of cAMP-dependent protein kinase (PKA type II). Acts as an anchor for a PKA-signaling complex onto mitotic chromosomes, which is required for maintenance of chromosomes in a condensed form throughout mitosis. Recruits condensin complex subunit NCAPD2 to chromosomes required for chromatin condensation; the function appears to be independent from PKA-anchoring. May help to deliver cyclin D/E to CDK4 to facilitate cell cycle progression. Required for cell cycle G2/M transition and histone deacetylation during mitosis. In mitotic cells recruits HDAC3 to the vicinity of chromatin leading to deacetylation and subsequent phosphorylation at 'Ser-10' of histone H3; in this function may act redundantly with AKAP8L. Involved in nuclear retention of RPS6KA1 upon ERK activation thus inducing cell proliferation. May be involved in regulation of DNA replication by acting as scaffold for MCM2. Enhances HMT activity of the KMT2 family MLL4/WBP7 complex and is involved in transcriptional regulation. In a teratocarcinoma cell line is involved in retinoic acid-mediated induction of developmental genes implicating H3 'Lys-4' methylation. May be involved in recruitment of active CASP3 to the nucleus in apoptotic cells. May act as a carrier protein of GJA1 for its transport to the nucleus. May play a repressive role in the regulation of rDNA transcription. Preferentially binds GC-rich DNA in vitro. In cells, associates with ribosomal RNA (rRNA) chromatin, preferentially with rRNA promoter and transcribed regions. Involved in modulation of Toll-like receptor signaling. Required for the cAMP-dependent suppression of TNF-alpha in early stages of LPS-induced macrophage activation; the function probably implicates targeting of PKA to NFKB1. This is A-kinase anchor protein 8 (Akap8) from Rattus norvegicus (Rat).